The primary structure comprises 87 residues: U3-theraphotoxin-Hhn1p (87 aa).

The signal sequence occupies residues 1-24 (MVNMKASMFLTFAGLVLLFVVCYA). A propeptide spanning residues 25–52 (SESEEKEFPKEMLSSIFAVDNDFKQEER) is cleaved from the precursor. Intrachain disulfides connect C54–C67, C61–C72, and C66–C79.

The protein belongs to the neurotoxin 10 (Hwtx-1) family. 51 (Hntx-8) subfamily. Hntx-8 sub-subfamily. As to expression, expressed by the venom gland.

The protein resides in the secreted. Its function is as follows. Ion channel inhibitor. The chain is U3-theraphotoxin-Hhn1p from Cyriopagopus hainanus (Chinese bird spider).